The following is a 576-amino-acid chain: Arginine--tRNA ligase (576 aa).

Positions 126-136 match the 'HIGH' region motif; it reads ANPTGPMHIGH.

Belongs to the class-I aminoacyl-tRNA synthetase family. In terms of assembly, monomer.

It is found in the cytoplasm. It catalyses the reaction tRNA(Arg) + L-arginine + ATP = L-arginyl-tRNA(Arg) + AMP + diphosphate. The protein is Arginine--tRNA ligase (argS) of Rickettsia prowazekii (strain Madrid E).